Consider the following 159-residue polypeptide: Ecotin (159 aa).

Positions 1–22 (MRPTPLSTILALTMAATAPAMA) are cleaved as a signal peptide. Cys-68 and Cys-105 are oxidised to a cystine.

Belongs to the protease inhibitor I11 (ecotin) family. As to quaternary structure, homodimer.

It is found in the periplasm. In terms of biological role, general inhibitor of family S1 serine proteases. The polypeptide is Ecotin (Pseudomonas putida (strain W619)).